Here is an 879-residue protein sequence, read N- to C-terminus: Alanine--tRNA ligase (879 aa).

Zn(2+) is bound by residues H566, H570, C668, and H672.

It belongs to the class-II aminoacyl-tRNA synthetase family. It depends on Zn(2+) as a cofactor.

The protein resides in the cytoplasm. It catalyses the reaction tRNA(Ala) + L-alanine + ATP = L-alanyl-tRNA(Ala) + AMP + diphosphate. Functionally, catalyzes the attachment of alanine to tRNA(Ala) in a two-step reaction: alanine is first activated by ATP to form Ala-AMP and then transferred to the acceptor end of tRNA(Ala). Also edits incorrectly charged Ser-tRNA(Ala) and Gly-tRNA(Ala) via its editing domain. This chain is Alanine--tRNA ligase, found in Oceanobacillus iheyensis (strain DSM 14371 / CIP 107618 / JCM 11309 / KCTC 3954 / HTE831).